The primary structure comprises 253 residues: Bridging integrator 3 (253 aa).

The 224-residue stretch at 9–232 folds into the BAR domain; that stretch reads GQPKKQIVSK…LDQPGHSDEH (224 aa). Coiled coils occupy residues 16-57 and 120-151; these read VSKT…AMSK and SLNMAVKRREQALQDYGRLQAKVEKYEEKEKT.

Its subcellular location is the cytoplasm. It localises to the cytoskeleton. Functionally, involved in cytokinesis and septation where it has a role in the localization of F-actin. The protein is Bridging integrator 3 (Bin3) of Rattus norvegicus (Rat).